A 1947-amino-acid polypeptide reads, in one-letter code: Sodium channel protein type 3 subunit alpha (1947 aa).

The Cytoplasmic portion of the chain corresponds to 1–128 (MAQALLVPPG…KIAIKILVHS (128 aa)). The disordered stretch occupies residues 28–60 (RAAEEKAKKPKKEQDIDDENKPKPNSDLEAGKN). Over residues 46–57 (ENKPKPNSDLEA) the composition is skewed to basic and acidic residues. Residues 110–455 (ILTPLNPVRK…QQMLEQLKKQ (346 aa)) form an I repeat. The helical transmembrane segment at 129–146 (LFSMLIMCTILTNCVFMT) threads the bilayer. Residues 147–152 (LSNPPD) are Extracellular-facing. The chain crosses the membrane as a helical span at residues 153-174 (WTKNVEYTFTGIYTFESLIKIL). The Cytoplasmic portion of the chain corresponds to 175-188 (ARGFCLEDFTFLRD). Residues 189 to 206 (PWNWLDFSVIVMAYVTEF) form a helical membrane-spanning segment. At 207 to 213 (VDLGNVS) the chain is on the extracellular side. N-linked (GlcNAc...) asparagine glycosylation is present at asparagine 211. A helical transmembrane segment spans residues 214-235 (ALRTFRVLRALKTISVIPGLKT). The Cytoplasmic segment spans residues 236 to 249 (IVGALIQSVKKLSD). The chain crosses the membrane as a helical span at residues 250 to 269 (VMILTVFCLSVFALIGLQLF). Residues 270 to 369 (MGNLRNKCLQ…NYGYTSFDTF (100 aa)) are Extracellular-facing. Asparagine 290, asparagine 296, asparagine 302, asparagine 307, and asparagine 339 each carry an N-linked (GlcNAc...) asparagine glycan. An intramembrane region (pore-forming) is located at residues 370–386 (SWAFLSLFRLMTQDYWE). Residues 387-397 (NLYQLTLRAAG) are Extracellular-facing. Residues 398–424 (KTYMIFFVLVIFLGSFYLVNLILAVVA) form a helical membrane-spanning segment. The Cytoplasmic segment spans residues 425–712 (MAYEEQNQAT…LVNLIVMDPF (288 aa)). Phosphoserine is present on residues serine 484, serine 485, and serine 486. 2 disordered regions span residues 493–529 (SKSA…SESE) and 587–632 (VGSE…ETEV). Positions 500-509 (RNRRKKRRQR) are enriched in basic residues. Basic and acidic residues-rich tracts occupy residues 510 to 529 (EHLE…SESE) and 596 to 622 (DEHS…ERRN). Residues 693–965 (CCDSWLKVKH…QIAVGRMQKG (273 aa)) form an II repeat. A helical membrane pass occupies residues 713-730 (VDLAITICIVLNTLFMAM). The Extracellular segment spans residues 731–738 (EHYPMTEQ). A helical membrane pass occupies residues 739 to 763 (FSSVLTVGNLVFTGIFTAEMVLKII). Residues 764–773 (AMDPYYYFQE) lie on the Cytoplasmic side of the membrane. Residues 774 to 793 (GWNIFDGIIVSLSLMELGLA) traverse the membrane as a helical segment. The Extracellular segment spans residues 794-797 (NVEG). A helical transmembrane segment spans residues 798–816 (LSVLRSFRLLRVFKLAKSW). Over 817–834 (PTLNMLIKIIGNSVGALG) the chain is Cytoplasmic. A helical membrane pass occupies residues 835 to 855 (NLTLVLAIIVFIFAVVGMQLF). The Extracellular portion of the chain corresponds to 856 to 880 (GKSYKECVCKINEDCKLPRWHMNDF). The cysteines at positions 864 and 870 are disulfide-linked. An intramembrane region (pore-forming) is located at residues 881–896 (FHSFLIVFRVLCGEWI). Over 897–907 (ETMWDCMEVAG) the chain is Extracellular. Residues cysteine 902 and cysteine 911 are joined by a disulfide bond. A helical membrane pass occupies residues 908 to 934 (QTMCLIVFMLVMVIGNLVVLNLFLALL). At 935–1157 (LSSFSSDNLA…RKTCYSIVEH (223 aa)) the chain is on the cytoplasmic side. The segment at 1070–1113 (EEFSSESELEESKEKLNATSSSEGSTVDVAPPREGEQAEIEPEE) is disordered. The stretch at 1140–1451 (KGKIWWNLRK…KKYYNAMKKL (312 aa)) is one III repeat. A helical transmembrane segment spans residues 1158 to 1178 (NWFETFIVFMILLSSGALAFE). The Extracellular segment spans residues 1179–1190 (DIYIEQRKTIKT). The chain crosses the membrane as a helical span at residues 1191-1212 (MLEYADKVFTYIFILEMLLKWV). Topologically, residues 1213-1218 (AYGFQT) are cytoplasmic. A helical membrane pass occupies residues 1219-1244 (YFTNAWCWLDFLIVDVSLVSLVANAL). At 1245-1253 (GYSELGAIK) the chain is on the extracellular side. The helical transmembrane segment at 1254–1272 (SLRTLRALRPLRALSRFEG) threads the bilayer. The Cytoplasmic portion of the chain corresponds to 1273 to 1285 (MRVVVNALVGAIP). The helical transmembrane segment at 1286 to 1308 (SIMNVLLVCLIFWLIFSIMGVNL) threads the bilayer. The Extracellular segment spans residues 1309-1354 (FAGKFYHCVNMTTGSMFDMSEVNNFSDCQALGKQARWKNVKVNFDN). The cysteines at positions 1316 and 1336 are disulfide-linked. N-linked (GlcNAc...) asparagine glycans are attached at residues asparagine 1318 and asparagine 1332. The pore-forming intramembrane region spans 1355–1371 (VGAGYLALLQVATFKGW). Over 1372-1394 (MDIMYAAVDSRDVKLQPVYEENL) the chain is Extracellular. The chain crosses the membrane as a helical span at residues 1395–1420 (YMYLYFVIFIIFGSFFTLNLFIGVII). The Cytoplasmic segment spans residues 1421–1478 (DNFNQQKKKFGGQDIFMTEEQKKYYNAMKKLGSKKPQKPIPRPANKFQGMVFDFVTRQ). Serine 1453 bears the Phosphoserine mark. An IV repeat occupies 1460-1758 (IPRPANKFQG…WEKFDPDATQ (299 aa)). Residues 1479 to 1497 (VFDISIMILICLNMVTMMV) traverse the membrane as a helical segment. Over 1498-1505 (ETDDQSKY) the chain is Extracellular. Residues 1506-1529 (MTLVLSRINLVFIVLFTGEFLLKL) form a helical membrane-spanning segment. At 1530-1539 (ISLRYYYFTI) the chain is on the cytoplasmic side. Residues 1540–1557 (GWNIFDFVVVILSIVGMF) form a helical membrane-spanning segment. Over 1558–1569 (LAELIEKYFVSP) the chain is Extracellular. Residues 1570–1592 (TLFRVIRLARIGRILRLIKGAKG) form a helical membrane-spanning segment. Over 1593-1605 (IRTLLFALMMSLP) the chain is Cytoplasmic. A helical membrane pass occupies residues 1606–1629 (ALFNIGLLLFLVMFIYAIFGMSNF). Residues 1630–1651 (AYVKKEAGIDDMFNFETFGNSM) lie on the Extracellular side of the membrane. An intramembrane region (pore-forming) is located at residues 1652 to 1664 (ICLFQITTSAGWD). Residues 1665-1696 (GLLAPILNSAPPDCDPDAIHPGSSVKGDCGNP) are Extracellular-facing. Residues 1697–1722 (SVGIFFFVSYIIISFLVVVNMYIAVI) form a helical membrane-spanning segment. Over 1723–1947 (LENFSVATEE…PEKESKGKEV (225 aa)) the chain is Cytoplasmic. Residues 1852-1881 (EEVSAAIIQRNYRCYLLKQRLKNISNTYDK) enclose the IQ domain. The segment at 1901–1947 (LNGNSTPEKTDGSSSTTSPPSYDSVTKPDKEKFEKDKPEKESKGKEV) is disordered. Over residues 1926–1947 (TKPDKEKFEKDKPEKESKGKEV) the composition is skewed to basic and acidic residues.

It belongs to the sodium channel (TC 1.A.1.10) family. Nav1.3/SCN3A subfamily. In terms of assembly, heterooligomer of an alpha subunit, SCN3A, and 1 to 3 regulatory beta subunits including SCN1B and SCN2B; disulfide-linked with some beta subunits like SCN2B. Interacts with NEDD4L; could regulate expression of SCN3A at the plasma membrane through ubiquitination-regulated endocytosis. Post-translationally, may be ubiquitinated by NEDD4L; which would promote its endocytosis. In terms of processing, phosphorylation at Ser-1453 in a highly conserved cytoplasmic loop slows inactivation of the channel and reduces peak sodium currents. As to expression, expressed in enterochromaffin cells in both colon and small bowel (at protein level). Expressed in pancreatic alpha and beta cells.

It is found in the cell membrane. It localises to the basal cell membrane. The catalysed reaction is Na(+)(in) = Na(+)(out). Functionally, pore-forming subunit of Nav1.3, a voltage-gated sodium (Nav) channel that directly mediates the depolarizing phase of action potentials in excitable membranes. Navs, also called VGSCs (voltage-gated sodium channels) or VDSCs (voltage-dependent sodium channels), operate by switching between closed and open conformations depending on the voltage difference across the membrane. In the open conformation they allow Na(+) ions to selectively pass through the pore, along their electrochemical gradient. The influx of Na+ ions provokes membrane depolarization, initiating the propagation of electrical signals throughout cells and tissues. In some secretory cell types, it also participates in cell excitability through membrane depolarization and regulates cells responsiveness to stimuli triggering secretion. For instance, it controls the release of serotonin/5-hydroxytryptamine by enterochromaffin cells and is required for both glucagon- and glucose-induced insulin secretion in pancreatic endocrine cells. This chain is Sodium channel protein type 3 subunit alpha, found in Mus musculus (Mouse).